A 276-amino-acid polypeptide reads, in one-letter code: Secreted RxLR effector protein 150 (276 aa).

The signal sequence occupies residues 1-18 (MRNIAFLIGLFFIGYSSC). The short motif at 49–64 (RTLQADDRERILAEER) is the RxLR-dEER element.

Belongs to the RxLR effector family.

The protein resides in the secreted. The protein localises to the host nucleus. It is found in the host cytoplasm. Its function is as follows. Secreted effector that partially suppresses the host cell death induced by cell death-inducing proteins. In Plasmopara viticola (Downy mildew of grapevine), this protein is Secreted RxLR effector protein 150.